Here is a 160-residue protein sequence, read N- to C-terminus: SsrA-binding protein (160 aa).

Positions 131 to 160 are disordered; sequence KKEYDKRDTEKARDSDREIQRAIRSKGKED.

The protein belongs to the SmpB family.

Its subcellular location is the cytoplasm. Functionally, required for rescue of stalled ribosomes mediated by trans-translation. Binds to transfer-messenger RNA (tmRNA), required for stable association of tmRNA with ribosomes. tmRNA and SmpB together mimic tRNA shape, replacing the anticodon stem-loop with SmpB. tmRNA is encoded by the ssrA gene; the 2 termini fold to resemble tRNA(Ala) and it encodes a 'tag peptide', a short internal open reading frame. During trans-translation Ala-aminoacylated tmRNA acts like a tRNA, entering the A-site of stalled ribosomes, displacing the stalled mRNA. The ribosome then switches to translate the ORF on the tmRNA; the nascent peptide is terminated with the 'tag peptide' encoded by the tmRNA and targeted for degradation. The ribosome is freed to recommence translation, which seems to be the essential function of trans-translation. In Azotobacter vinelandii (strain DJ / ATCC BAA-1303), this protein is SsrA-binding protein.